The chain runs to 535 residues: Dimethylaniline monooxygenase [N-oxide-forming] 2 (535 aa).

An N-acetylalanine modification is found at alanine 2. Residues 9–13, glutamate 32, 40–41, and 61–62 each bind FAD; these read GAGVS, LW, and NT. Residues 60–61 and 195–198 contribute to the NADP(+) site; these read TN and SAAD. Lysine 492 participates in a covalent cross-link: Glycyl lysine isopeptide (Lys-Gly) (interchain with G-Cter in SUMO). The chain crosses the membrane as a helical span at residues 510–530; the sequence is APVSFLLKILGLLAVVLAFFF.

This sequence belongs to the FMO family. FAD is required as a cofactor. The cofactor is Mg(2+).

The protein localises to the microsome membrane. It is found in the endoplasmic reticulum membrane. In terms of biological role, catalyzes the oxidative metabolism of numerous xenobiotics, including mainly therapeutic drugs and insecticides that contain a soft nucleophile, most commonly nitrogen and sulfur and participates to their bioactivation. Catalyzes the S-oxygenation of the prodrug ethionamide (ETA) to the S-oxide (ETASO), the first step in its bioactivation following by the second oxygenation to the sulfinic acid but to a lesser extend. The sequence is that of Dimethylaniline monooxygenase [N-oxide-forming] 2 from Mus musculus (Mouse).